We begin with the raw amino-acid sequence, 228 residues long: Homeobox protein Hox-B6a (228 aa).

The short motif at 132-137 (VYPWMQ) is the Antp-type hexapeptide element. A DNA-binding region (homeobox) is located at residues 150–209 (GRRGRQTYTRYQTLELEKEFHFNRYLTRRRRIEIAHALCLTERQIKIWFQNRRMKWKKEN).

The protein belongs to the Antp homeobox family.

The protein localises to the nucleus. Its function is as follows. Sequence-specific transcription factor which is part of a developmental regulatory system that provides cells with specific positional identities on the anterior-posterior axis. This Danio rerio (Zebrafish) protein is Homeobox protein Hox-B6a (hoxb6a).